Reading from the N-terminus, the 417-residue chain is Serine hydroxymethyltransferase (417 aa).

(6S)-5,6,7,8-tetrahydrofolate is bound by residues L121 and 125-127; that span reads GHL. At K229 the chain carries N6-(pyridoxal phosphate)lysine. 355-357 lines the (6S)-5,6,7,8-tetrahydrofolate pocket; it reads SPF.

Belongs to the SHMT family. As to quaternary structure, homodimer. Requires pyridoxal 5'-phosphate as cofactor.

It is found in the cytoplasm. The enzyme catalyses (6R)-5,10-methylene-5,6,7,8-tetrahydrofolate + glycine + H2O = (6S)-5,6,7,8-tetrahydrofolate + L-serine. It participates in one-carbon metabolism; tetrahydrofolate interconversion. Its pathway is amino-acid biosynthesis; glycine biosynthesis; glycine from L-serine: step 1/1. In terms of biological role, catalyzes the reversible interconversion of serine and glycine with tetrahydrofolate (THF) serving as the one-carbon carrier. This reaction serves as the major source of one-carbon groups required for the biosynthesis of purines, thymidylate, methionine, and other important biomolecules. Also exhibits THF-independent aldolase activity toward beta-hydroxyamino acids, producing glycine and aldehydes, via a retro-aldol mechanism. This is Serine hydroxymethyltransferase from Shewanella baltica (strain OS195).